The primary structure comprises 651 residues: MPSEVTPKVPERPSRRKTSELFPLSGSESGDIKANSEPPTPAGTPNVPTRRPILKAKTMTSFESGMDQESLPKVPLQRPVRRSTTEELNNVMNNTSKELEEIESLISKHNIHNVSRKKSPTSVEEGKVAAIHQNGQRSASDNKTSTNPSPLEKNEHEGAEGNESAISPSNLVNKSNNEVTEHSDSEDLTEKQKVHAALDNEAGDRSHFEEKLIPGDMKVQVDVSKDVEEGSLNALPPSGITESDDKAEKFTKHPESSLEELQKHQEQQEEKIFQNPTDEESTTSLNEKQEGKDNMEVNSQPQGPSDTETVIAATSSNVPSQIASEEENDVPVIPRSRPKKDFEAHVQKEELPNTQEKRVSEECDSTLISTEEESKIPKIPSERPKRRAPPPVPKKPSSRIAAFQEMLQKQQQQDLHNNGNSSATTASADIAKKHTDSSITSDTTKADFTSKLNGLFALPGMVNPGQLPPSLEKKLSSPDTESKLGPQDQSQAKTGPLGGTRRGRGPRGRKLPSKVASVEKIEEDDNTNKIEIFNNWNVSSSFSKEKVLIDTTPGEQAERALDEKEKLPANAESDPLSQLPQTNTVGNRKAISEESLSPSEAITNRDQNDTTEIQEQQMEEQMEVDMERELSGGYEDVDSALHSEEASFHSL.

Positions 1–85 (MPSEVTPKVP…LQRPVRRSTT (85 aa)) are disordered. Residues 9-19 (VPERPSRRKTS) are compositionally biased toward basic and acidic residues. A Phosphothreonine modification is found at Thr-18. Ser-36 is modified (phosphoserine). At Thr-58 the chain carries Phosphothreonine. Ser-70 carries the phosphoserine modification. A Phosphothreonine modification is found at Thr-85. Ser-104 is modified (phosphoserine). A compositionally biased stretch (basic residues) spans 110-119 (NIHNVSRKKS). Disordered regions lie at residues 110–522 (NIHN…EKIE) and 549–651 (IDTT…FHSL). Composition is skewed to polar residues over residues 133–149 (QNGQ…TNPS) and 164–178 (SAIS…SNNE). Positions 179–213 (VTEHSDSEDLTEKQKVHAALDNEAGDRSHFEEKLI) are enriched in basic and acidic residues. A phosphoserine mark is found at Ser-183, Ser-206, and Ser-231. Over residues 243–272 (SDDKAEKFTKHPESSLEELQKHQEQQEEKI) the composition is skewed to basic and acidic residues. Thr-277 carries the phosphothreonine modification. Ser-284 carries the post-translational modification Phosphoserine. Residues 296–323 (EVNSQPQGPSDTETVIAATSSNVPSQIA) are compositionally biased toward polar residues. Ser-324 is subject to Phosphoserine. Basic and acidic residues-rich tracts occupy residues 339–361 (KKDF…RVSE) and 372–383 (EESKIPKIPSER). Residues 383–396 (RPKRRAPPPVPKKP) form an interaction with SH3 domain of ABP1 region. Composition is skewed to polar residues over residues 414-427 (DLHN…TTAS) and 437-452 (SSIT…TSKL). Residues 471–482 (LEKKLSSPDTES) show a composition bias toward basic and acidic residues. Residues 501–512 (RRGRGPRGRKLP) are compositionally biased toward basic residues. Thr-552 is subject to Phosphothreonine. Residues 556 to 567 (QAERALDEKEKL) show a composition bias toward basic and acidic residues. The span at 575-586 (PLSQLPQTNTVG) shows a compositional bias: polar residues. Ser-592, Ser-595, Ser-597, Ser-599, Ser-639, Ser-643, Ser-647, and Ser-650 each carry phosphoserine. The segment covering 594–605 (ESLSPSEAITNR) has biased composition (polar residues). The segment covering 639–651 (SALHSEEASFHSL) has biased composition (basic and acidic residues).

The protein belongs to the AIM21 family. Interacts with ribosomes. Interacts with ABP1.

Its subcellular location is the cytoplasm. It is found in the cytoskeleton. It localises to the actin patch. Functionally, involved in mitochondrial migration along actin filaments. The sequence is that of Altered inheritance of mitochondria protein 21 (AIM21) from Saccharomyces cerevisiae (strain RM11-1a) (Baker's yeast).